Consider the following 547-residue polypeptide: Glucose-6-phosphate isomerase 2 (547 aa).

Glu-351 functions as the Proton donor in the catalytic mechanism. Active-site residues include His-382 and Lys-508.

The protein belongs to the GPI family.

It localises to the cytoplasm. The enzyme catalyses alpha-D-glucose 6-phosphate = beta-D-fructose 6-phosphate. It participates in carbohydrate biosynthesis; gluconeogenesis. Its pathway is carbohydrate degradation; glycolysis; D-glyceraldehyde 3-phosphate and glycerone phosphate from D-glucose: step 2/4. Functionally, catalyzes the reversible isomerization of glucose-6-phosphate to fructose-6-phosphate. In Neisseria meningitidis serogroup A / serotype 4A (strain DSM 15465 / Z2491), this protein is Glucose-6-phosphate isomerase 2.